Consider the following 312-residue polypeptide: Olfactory receptor 1D2 (312 aa).

Over 1–25 (MDGGNQSEGSEFLLLGMSESPEQQR) the chain is Extracellular. N5 is a glycosylation site (N-linked (GlcNAc...) asparagine). The chain crosses the membrane as a helical span at residues 26-49 (ILFWMFLSMYLVTVVGNVLIILAI). Residues 50–57 (SSDSRLHT) lie on the Cytoplasmic side of the membrane. The helical transmembrane segment at 58–79 (PVYFFLANLSFTDLFFVTNTIP) threads the bilayer. At 80–100 (KMLVNLQSHNKAISYAGCLTQ) the chain is on the extracellular side. Cysteines 97 and 189 form a disulfide. A helical transmembrane segment spans residues 101–120 (LYFLVSLVALDNLILAVMAY). Residues 121-139 (DRYVAICCPLHYTTAMSPK) lie on the Cytoplasmic side of the membrane. A helical transmembrane segment spans residues 140 to 158 (LCILLLSLCWVLSVLYGLI). Residues 159 to 196 (HTLLMTRVTFCGSRKIHYIFCEMYVLLRMACSNIQINH) are Extracellular-facing. A glycan (N-linked (GlcNAc...) asparagine) is linked at N195. The chain crosses the membrane as a helical span at residues 197–219 (TVLIATGCFIFLIPFGFVIISYV). Over 220–236 (LIIRAILRIPSVSKKYK) the chain is Cytoplasmic. A helical membrane pass occupies residues 237-259 (AFSTCASHLGAVSLFYGTLCMVY). Residues 260 to 271 (LKPLHTYSVKDS) lie on the Extracellular side of the membrane. The chain crosses the membrane as a helical span at residues 272–291 (VATVMYAVVTPMMNPFIYSL). The Cytoplasmic segment spans residues 292-312 (RNKDMHGALGRLLDKHFKRLT).

This sequence belongs to the G-protein coupled receptor 1 family. In terms of tissue distribution, expressed in testis. Expressed in spermatozoa (at protein level). Expressed in olfactory epithelium.

The protein localises to the cell membrane. Its function is as follows. Odorant receptor which may be involved in sperm chemotaxis. Bourgeonal is a strong chemoattractant for sperm in vitro and is shown to be a strong agonist for OR1D2 in vitro. May also function in olfactory reception. The sequence is that of Olfactory receptor 1D2 (OR1D2) from Homo sapiens (Human).